A 123-amino-acid polypeptide reads, in one-letter code: Fluoride-specific ion channel FluC (123 aa).

4 helical membrane passes run 5 to 25 (LIIGIGGFIGAILRYVISGII), 29 to 49 (FGIPTGTFIVNLIGSFIVGFV), 65 to 85 (LIITGFCGALTTFSTFSYETF), and 94 to 114 (IKFLTNIFINVMGCLIMIYVG). The Na(+) site is built by glycine 72 and threonine 75.

Belongs to the fluoride channel Fluc/FEX (TC 1.A.43) family.

It localises to the cell membrane. The catalysed reaction is fluoride(in) = fluoride(out). Its activity is regulated as follows. Na(+) is not transported, but it plays an essential structural role and its presence is essential for fluoride channel function. Functionally, fluoride-specific ion channel. Important for reducing fluoride concentration in the cell, thus reducing its toxicity. The sequence is that of Fluoride-specific ion channel FluC from Methanococcus aeolicus (strain ATCC BAA-1280 / DSM 17508 / OCM 812 / Nankai-3).